We begin with the raw amino-acid sequence, 290 residues long: NAD kinase (290 aa).

The Proton acceptor role is filled by aspartate 72. NAD(+)-binding positions include 72 to 73 (DG), lysine 77, 145 to 146 (NE), aspartate 175, 186 to 191 (TAYSLS), and alanine 210.

Belongs to the NAD kinase family. A divalent metal cation is required as a cofactor.

It localises to the cytoplasm. The catalysed reaction is NAD(+) + ATP = ADP + NADP(+) + H(+). Functionally, involved in the regulation of the intracellular balance of NAD and NADP, and is a key enzyme in the biosynthesis of NADP. Catalyzes specifically the phosphorylation on 2'-hydroxyl of the adenosine moiety of NAD to yield NADP. The protein is NAD kinase of Bacteroides fragilis (strain YCH46).